Consider the following 86-residue polypeptide: Protein Tat (86 aa).

Residues 1–24 (MDPVDPNQEPWNHPGSQPRTACNN) form an interaction with human CREBBP region. The tract at residues 1-48 (MDPVDPNQEPWNHPGSQPRTACNNCYCKKCCYHCQLCFLKKGLGIYYG) is transactivation. 3 residues coordinate Zn(2+): Cys-22, Cys-25, and Cys-27. Positions 22-37 (CNNCYCKKCCYHCQLC) are cysteine-rich. Lys-28 is subject to N6-acetyllysine; by host PCAF. Zn(2+)-binding residues include Cys-30, His-33, Cys-34, and Cys-37. Residues 38 to 48 (FLKKGLGIYYG) are core. Over residues 48-58 (GRKKRRQRRGT) the composition is skewed to basic residues. The segment at 48 to 86 (GRKKRRQRRGTPKSLQDHQTLIPKQPLSRTSGDPTGPEK) is disordered. A Nuclear localization signal, RNA-binding (TAR), and protein transduction motif is present at residues 49 to 57 (RKKRRQRRG). An interaction with the host capping enzyme RNGTT region spans residues 49-86 (RKKRRQRRGTPKSLQDHQTLIPKQPLSRTSGDPTGPEK). N6-acetyllysine; by host EP300 and GCN5L2 is present on residues Lys-50 and Lys-51. Asymmetric dimethylarginine; by host PRMT6 occurs at positions 52 and 53. A Glycyl lysine isopeptide (Lys-Gly) (interchain with G-Cter in ubiquitin) cross-link involves residue Lys-71.

The protein belongs to the lentiviruses Tat family. Interacts with host CCNT1. Associates with the P-TEFb complex composed at least of Tat, P-TEFb (CDK9 and CCNT1), TAR RNA, RNA Pol II. Recruits the HATs CREBBP, TAF1/TFIID, EP300, PCAF and GCN5L2. Interacts with host KAT5/Tip60; this interaction targets the latter to degradation. Interacts with the host deacetylase SIRT1. Interacts with host capping enzyme RNGTT; this interaction stimulates RNGTT. Binds to host KDR, and to the host integrins ITGAV/ITGB3 and ITGA5/ITGB1. Interacts with host KPNB1/importin beta-1 without previous binding to KPNA1/importin alpha-1. Interacts with EIF2AK2. Interacts with host nucleosome assembly protein NAP1L1; this interaction may be required for the transport of Tat within the nucleus, since the two proteins interact at the nuclear rim. Interacts with host C1QBP/SF2P32; this interaction involves lysine-acetylated Tat. Interacts with the host chemokine receptors CCR2, CCR3 and CXCR4. Interacts with host DPP4/CD26; this interaction may trigger an anti-proliferative effect. Interacts with host LDLR. Interacts with the host extracellular matrix metalloproteinase MMP1. Interacts with host PRMT6; this interaction mediates Tat's methylation. Interacts with, and is ubiquitinated by MDM2/Hdm2. Interacts with host PSMC3 and HTATIP2. Interacts with STAB1; this interaction may overcome SATB1-mediated repression of IL2 and IL2RA (interleukin) in T cells by binding to the same domain than HDAC1. Interacts (when acetylated) with human CDK13, thereby increasing HIV-1 mRNA splicing and promoting the production of the doubly spliced HIV-1 protein Nef. Interacts with host TBP; this interaction modulates the activity of transcriptional pre-initiation complex. Interacts with host RELA. Interacts with host PLSCR1; this interaction negatively regulates Tat transactivation activity by altering its subcellular distribution. Post-translationally, asymmetrical arginine methylation by host PRMT6 seems to diminish the transactivation capacity of Tat and affects the interaction with host CCNT1. In terms of processing, acetylation by EP300, CREBBP, GCN5L2/GCN5 and PCAF regulates the transactivation activity of Tat. EP300-mediated acetylation of Lys-50 promotes dissociation of Tat from the TAR RNA through the competitive binding to PCAF's bromodomain. In addition, the non-acetylated Tat's N-terminus can also interact with PCAF. PCAF-mediated acetylation of Lys-28 enhances Tat's binding to CCNT1. Lys-50 is deacetylated by SIRT1. Polyubiquitination by host MDM2 does not target Tat to degradation, but activates its transactivation function and fosters interaction with CCNT1 and TAR RNA. Post-translationally, phosphorylated by EIF2AK2 on serine and threonine residues adjacent to the basic region important for TAR RNA binding and function. Phosphorylation of Tat by EIF2AK2 is dependent on the prior activation of EIF2AK2 by dsRNA.

The protein localises to the host nucleus. The protein resides in the host nucleolus. It localises to the host cytoplasm. It is found in the secreted. Transcriptional activator that increases RNA Pol II processivity, thereby increasing the level of full-length viral transcripts. Recognizes a hairpin structure at the 5'-LTR of the nascent viral mRNAs referred to as the transactivation responsive RNA element (TAR) and recruits the cyclin T1-CDK9 complex (P-TEFb complex) that will in turn hyperphosphorylate the RNA polymerase II to allow efficient elongation. The CDK9 component of P-TEFb and other Tat-activated kinases hyperphosphorylate the C-terminus of RNA Pol II that becomes stabilized and much more processive. Other factors such as HTATSF1/Tat-SF1, SUPT5H/SPT5, and HTATIP2 are also important for Tat's function. Besides its effect on RNA Pol II processivity, Tat induces chromatin remodeling of proviral genes by recruiting the histone acetyltransferases (HATs) CREBBP, EP300 and PCAF to the chromatin. This also contributes to the increase in proviral transcription rate, especially when the provirus integrates in transcriptionally silent region of the host genome. To ensure maximal activation of the LTR, Tat mediates nuclear translocation of NF-kappa-B by interacting with host RELA. Through its interaction with host TBP, Tat may also modulate transcription initiation. Tat can reactivate a latently infected cell by penetrating in it and transactivating its LTR promoter. In the cytoplasm, Tat is thought to act as a translational activator of HIV-1 mRNAs. In terms of biological role, extracellular circulating Tat can be endocytosed by surrounding uninfected cells via the binding to several surface receptors such as CD26, CXCR4, heparan sulfate proteoglycans (HSPG) or LDLR. Neurons are rarely infected, but they internalize Tat via their LDLR. Through its interaction with nuclear HATs, Tat is potentially able to control the acetylation-dependent cellular gene expression. Modulates the expression of many cellular genes involved in cell survival, proliferation or in coding for cytokines or cytokine receptors. Tat plays a role in T-cell and neurons apoptosis. Tat induced neurotoxicity and apoptosis probably contribute to neuroAIDS. Circulating Tat also acts as a chemokine-like and/or growth factor-like molecule that binds to specific receptors on the surface of the cells, affecting many cellular pathways. In the vascular system, Tat binds to ITGAV/ITGB3 and ITGA5/ITGB1 integrins dimers at the surface of endothelial cells and competes with bFGF for heparin-binding sites, leading to an excess of soluble bFGF. This is Protein Tat from Human immunodeficiency virus type 1 group M subtype H (isolate VI991) (HIV-1).